A 410-amino-acid polypeptide reads, in one-letter code: Arginine deiminase (410 aa).

Cysteine 400 serves as the catalytic Amidino-cysteine intermediate.

Belongs to the arginine deiminase family.

The protein resides in the cytoplasm. The catalysed reaction is L-arginine + H2O = L-citrulline + NH4(+). The protein operates within amino-acid degradation; L-arginine degradation via ADI pathway; carbamoyl phosphate from L-arginine: step 1/2. In Levilactobacillus brevis (strain ATCC 367 / BCRC 12310 / CIP 105137 / JCM 1170 / LMG 11437 / NCIMB 947 / NCTC 947) (Lactobacillus brevis), this protein is Arginine deiminase.